Here is a 160-residue protein sequence, read N- to C-terminus: Eosinophil cationic protein (160 aa).

Positions 1 to 27 are cleaved as a signal peptide; sequence MVPKLFTSQICLLLLLGLMGVEGSLHA. A required for nearly all of the bactericidal activities; partially involved in LPS-binding region spans residues 28–72; it reads RPPQFTRAQWFAIQHISLNPPRCTIAMRVINNYRWRCKNQNTFLR. Histidine 42 functions as the Proton acceptor in the catalytic mechanism. Intrachain disulfides connect cysteine 50-cysteine 110, cysteine 64-cysteine 123, cysteine 82-cysteine 138, and cysteine 89-cysteine 98. The residue at position 60 (tyrosine 60) is a 3'-nitrotyrosine. 65 to 69 is a binding site for substrate; that stretch reads KNQNT. Asparagine 84, asparagine 92, and asparagine 119 each carry an N-linked (GlcNAc...) asparagine glycan. Histidine 155 acts as the Proton donor in catalysis.

The protein belongs to the pancreatic ribonuclease family. Interacts with bacterial lipopolysaccharide (LPS) and lipoteichoic acid (LTA). In vitro interacts with phospholipid bilayers.

The protein localises to the secreted. In terms of biological role, cytotoxin and helminthotoxin with low-efficiency ribonuclease activity. Possesses a wide variety of biological activities. Exhibits antibacterial activity. The chain is Eosinophil cationic protein (RNASE3) from Gorilla gorilla gorilla (Western lowland gorilla).